A 408-amino-acid polypeptide reads, in one-letter code: Peptidase T (408 aa).

Histidine 78 contributes to the Zn(2+) binding site. Residue aspartate 80 is part of the active site. A Zn(2+)-binding site is contributed by aspartate 141. Catalysis depends on glutamate 175, which acts as the Proton acceptor. Glutamate 176, aspartate 198, and histidine 380 together coordinate Zn(2+).

This sequence belongs to the peptidase M20B family. Requires Zn(2+) as cofactor.

The protein localises to the cytoplasm. It carries out the reaction Release of the N-terminal residue from a tripeptide.. Functionally, cleaves the N-terminal amino acid of tripeptides. The protein is Peptidase T of Clostridium botulinum (strain ATCC 19397 / Type A).